The chain runs to 1070 residues: DNA-directed RNA polymerase subunit beta (1070 aa).

The protein belongs to the RNA polymerase beta chain family. In terms of assembly, in plastids the minimal PEP RNA polymerase catalytic core is composed of four subunits: alpha, beta, beta', and beta''. When a (nuclear-encoded) sigma factor is associated with the core the holoenzyme is formed, which can initiate transcription.

The protein resides in the plastid. Its subcellular location is the chloroplast. The enzyme catalyses RNA(n) + a ribonucleoside 5'-triphosphate = RNA(n+1) + diphosphate. In terms of biological role, DNA-dependent RNA polymerase catalyzes the transcription of DNA into RNA using the four ribonucleoside triphosphates as substrates. In Gossypium barbadense (Sea Island cotton), this protein is DNA-directed RNA polymerase subunit beta.